The primary structure comprises 223 residues: Ribose-5-phosphate isomerase A (223 aa).

Residues 32–35, 83–86, and 96–99 contribute to the substrate site; these read TGST, DGAD, and KGGG. Catalysis depends on glutamate 105, which acts as the Proton acceptor. Lysine 123 serves as a coordination point for substrate.

The protein belongs to the ribose 5-phosphate isomerase family. In terms of assembly, homodimer.

It carries out the reaction aldehydo-D-ribose 5-phosphate = D-ribulose 5-phosphate. The protein operates within carbohydrate degradation; pentose phosphate pathway; D-ribose 5-phosphate from D-ribulose 5-phosphate (non-oxidative stage): step 1/1. Catalyzes the reversible conversion of ribose-5-phosphate to ribulose 5-phosphate. The sequence is that of Ribose-5-phosphate isomerase A from Acinetobacter baumannii (strain SDF).